The sequence spans 554 residues: (E)-nerolidol synthase TPS18VF (554 aa).

Residues Arg276, Asp313, Asp317, Arg455, and Asp458 each contribute to the (2E,6E)-farnesyl diphosphate site. Asp313 and Asp317 together coordinate Mg(2+). Residues 313 to 317 carry the DDXXD motif motif; that stretch reads DDIFD. Mg(2+) contacts are provided by Asp458, Ser462, and Glu466.

The protein belongs to the terpene synthase family. Tpsb subfamily. It depends on Mg(2+) as a cofactor. The cofactor is Mn(2+). In terms of tissue distribution, highly expressed in glandular trichomes.

The catalysed reaction is (2E,6E)-farnesyl diphosphate + H2O = (6E)-nerolidol + diphosphate. It catalyses the reaction (2E)-geranyl diphosphate + H2O = (S)-linalool + diphosphate. It functions in the pathway secondary metabolite biosynthesis; terpenoid biosynthesis. Involved in sesquiterpene olefins biosynthesis, constituants of cannabinoids and terpenoids-rich resins. Catalyzes primarily the conversion of (2E)-farnesyl diphosphate to (E)-nerolidol, and the conversion of (2E)-geranyl diphosphate to (+)linalool. This chain is (E)-nerolidol synthase TPS18VF, found in Cannabis sativa (Hemp).